Consider the following 129-residue polypeptide: Small ribosomal subunit protein uS11 (129 aa).

Belongs to the universal ribosomal protein uS11 family. In terms of assembly, part of the 30S ribosomal subunit. Interacts with proteins S7 and S18. Binds to IF-3.

Located on the platform of the 30S subunit, it bridges several disparate RNA helices of the 16S rRNA. Forms part of the Shine-Dalgarno cleft in the 70S ribosome. The sequence is that of Small ribosomal subunit protein uS11 from Erwinia tasmaniensis (strain DSM 17950 / CFBP 7177 / CIP 109463 / NCPPB 4357 / Et1/99).